Here is a 261-residue protein sequence, read N- to C-terminus: Putative ankyrin repeat protein L99 (261 aa).

ANK repeat units lie at residues 21 to 50 (KVNP…DVHA), 51 to 80 (HEDY…NIHS), 81 to 110 (DRDL…NVNA), 112 to 140 (QNSA…NIHA), 142 to 170 (NNFC…DINA), 171 to 203 (DNGA…IDNC), and 231 to 259 (NELK…NINS).

The sequence is that of Putative ankyrin repeat protein L99 from Acanthamoeba polyphaga (Amoeba).